A 352-amino-acid chain; its full sequence is MRVLAAMSGGVDSAVAAARAVDAGHDVTGVHLALSRSPESDRTGARGCCTIEDARDARRAADILGIPFYVWDLADRFETDVIEEFVESYAAGRTPNPCVRCNERIKFAAVLDKALALGFEAVVTGHHARLDPDGTLRRSVDPDKDQSYVLGTLRPEQLAAARFPLGDSTKAQVRVEAAERRLAVADKPDSHDICFISHGDTGGWLRERLGPRPGPVIDATTGQTLGHHDGAYAFTVGQRRGLKLGRPAADGRPRYVLDISPVTSTVTVGPAEALDVRRLVADRAVWPHEGAVSCLAQVRAHGGVVPAVAQARDEELVVTLTTPVRGTAAGQAVVLYDGDRVLGGGHIRTTGG.

ATP is bound by residues 6-13 (AMSGGVDS) and leucine 32. Cysteine 101 functions as the Nucleophile in the catalytic mechanism. A disulfide bridge connects residues cysteine 101 and cysteine 194. Glycine 125 contributes to the ATP binding site. The tract at residues 144 to 146 (KDQ) is interaction with tRNA. The active-site Cysteine persulfide intermediate is cysteine 194.

This sequence belongs to the MnmA/TRMU family.

The protein localises to the cytoplasm. It carries out the reaction S-sulfanyl-L-cysteinyl-[protein] + uridine(34) in tRNA + AH2 + ATP = 2-thiouridine(34) in tRNA + L-cysteinyl-[protein] + A + AMP + diphosphate + H(+). Functionally, catalyzes the 2-thiolation of uridine at the wobble position (U34) of tRNA, leading to the formation of s(2)U34. The sequence is that of tRNA-specific 2-thiouridylase MnmA from Frankia casuarinae (strain DSM 45818 / CECT 9043 / HFP020203 / CcI3).